The sequence spans 388 residues: Tumor protein p53-inducible protein 13 (388 aa).

The N-terminal stretch at 1 to 27 (MVPPPPPPSRLLLVALVGLLSLHEVVA) is a signal peptide. The Extracellular segment spans residues 28 to 304 (EPAEEAGTRC…ARGPTPRTEE (277 aa)). The chain crosses the membrane as a helical span at residues 305–325 (AAWAAMALTFLLVLLTLATLC). The Cytoplasmic portion of the chain corresponds to 326–388 (TRLHRNFRRS…DSGPDSESSD (63 aa)). Basic residues predominate over residues 361 to 372 (PSRRIKRSRRRP). The tract at residues 361 to 388 (PSRRIKRSRRRPLLPPTPDSGPDSESSD) is disordered.

It is found in the cell membrane. Its subcellular location is the cytoplasm. May act as a tumor suppressor. Inhibits tumor cell growth, when overexpressed. The chain is Tumor protein p53-inducible protein 13 (Tp53i13) from Rattus norvegicus (Rat).